The primary structure comprises 104 residues: Large ribosomal subunit protein uL23 (104 aa).

The protein belongs to the universal ribosomal protein uL23 family. As to quaternary structure, part of the 50S ribosomal subunit. Contacts protein L29, and trigger factor when it is bound to the ribosome.

Its function is as follows. One of the early assembly proteins it binds 23S rRNA. One of the proteins that surrounds the polypeptide exit tunnel on the outside of the ribosome. Forms the main docking site for trigger factor binding to the ribosome. The chain is Large ribosomal subunit protein uL23 from Leptospira interrogans serogroup Icterohaemorrhagiae serovar copenhageni (strain Fiocruz L1-130).